The sequence spans 251 residues: uncharacterized protein (251 aa).

This is an uncharacterized protein from Bacillus subtilis (strain 168).